We begin with the raw amino-acid sequence, 306 residues long: Elongation factor Ts (306 aa).

An involved in Mg(2+) ion dislocation from EF-Tu region spans residues 80 to 83 (TDFV).

Belongs to the EF-Ts family.

The protein localises to the cytoplasm. In terms of biological role, associates with the EF-Tu.GDP complex and induces the exchange of GDP to GTP. It remains bound to the aminoacyl-tRNA.EF-Tu.GTP complex up to the GTP hydrolysis stage on the ribosome. The sequence is that of Elongation factor Ts from Methylorubrum populi (strain ATCC BAA-705 / NCIMB 13946 / BJ001) (Methylobacterium populi).